The following is a 467-amino-acid chain: Serine/threonine-protein kinase AFC1 (467 aa).

The 329-residue stretch at 115–443 (YQILSKMGEG…AREALNHPFF (329 aa)) folds into the Protein kinase domain. ATP is bound by residues 121 to 129 (MGEGTFGQV) and Lys-144. Asp-240 acts as the Proton acceptor in catalysis. Positions 447–467 (REQSIPPFNPNPHPFLYNQKN) are disordered.

Belongs to the protein kinase superfamily. CMGC Ser/Thr protein kinase family. Lammer subfamily.

It carries out the reaction L-seryl-[protein] + ATP = O-phospho-L-seryl-[protein] + ADP + H(+). The enzyme catalyses L-threonyl-[protein] + ATP = O-phospho-L-threonyl-[protein] + ADP + H(+). The catalysed reaction is L-tyrosyl-[protein] + ATP = O-phospho-L-tyrosyl-[protein] + ADP + H(+). Its function is as follows. Activator of yeast transcription factor, STE12. This is Serine/threonine-protein kinase AFC1 (AFC1) from Arabidopsis thaliana (Mouse-ear cress).